We begin with the raw amino-acid sequence, 467 residues long: Asparagine--tRNA ligase (467 aa).

Belongs to the class-II aminoacyl-tRNA synthetase family. Homodimer.

It localises to the cytoplasm. The enzyme catalyses tRNA(Asn) + L-asparagine + ATP = L-asparaginyl-tRNA(Asn) + AMP + diphosphate + H(+). This chain is Asparagine--tRNA ligase, found in Haemophilus influenzae (strain PittGG).